The primary structure comprises 33 residues: Photosystem II reaction center protein Psb30 (33 aa).

A helical membrane pass occupies residues 5–25; the sequence is VVAQLTVLALIVVSGPLVIGL.

This sequence belongs to the Psb30/Ycf12 family. In terms of assembly, PSII is composed of 1 copy each of membrane proteins PsbA, PsbB, PsbC, PsbD, PsbE, PsbF, PsbH, PsbI, PsbJ, PsbK, PsbL, PsbM, PsbT, PsbX, PsbY, PsbZ, Psb30/Ycf12, peripheral proteins of the oxygen-evolving complex and a large number of cofactors. It forms dimeric complexes.

It localises to the plastid. Its subcellular location is the chloroplast thylakoid membrane. Its function is as follows. A core subunit of photosystem II (PSII), probably helps stabilize the reaction center. This is Photosystem II reaction center protein Psb30 from Zygnema circumcarinatum (Green alga).